Consider the following 78-residue polypeptide: Large ribosomal subunit protein eL38 (78 aa).

The protein belongs to the eukaryotic ribosomal protein eL38 family. Component of the large ribosomal subunit. Mature ribosomes consist of a small (40S) and a large (60S) subunit. The 40S subunit contains about 32 different proteins and 1 molecule of RNA (18S). The 60S subunit contains 45 different proteins and 3 molecules of RNA (25S, 5.8S and 5S).

The protein resides in the cytoplasm. Component of the ribosome, a large ribonucleoprotein complex responsible for the synthesis of proteins in the cell. The small ribosomal subunit (SSU) binds messenger RNAs (mRNAs) and translates the encoded message by selecting cognate aminoacyl-transfer RNA (tRNA) molecules. The large subunit (LSU) contains the ribosomal catalytic site termed the peptidyl transferase center (PTC), which catalyzes the formation of peptide bonds, thereby polymerizing the amino acids delivered by tRNAs into a polypeptide chain. The nascent polypeptides leave the ribosome through a tunnel in the LSU and interact with protein factors that function in enzymatic processing, targeting, and the membrane insertion of nascent chains at the exit of the ribosomal tunnel. The protein is Large ribosomal subunit protein eL38 of Candida albicans (strain SC5314 / ATCC MYA-2876) (Yeast).